Reading from the N-terminus, the 109-residue chain is MKGIFLVVQLGFSIMVFLFLAAVNWYQGSELVSDRFDWNYTAKLSKLLNGIDAVSSPKQISQLDFFIYSAKHYPVMSALMIISFLYVLAALFLLIYSVKCNKQEIHLDC.

Positions 1-25 are cleaved as a signal peptide; sequence MKGIFLVVQLGFSIMVFLFLAAVNW. The chain crosses the membrane as a helical span at residues 73-95; it reads YPVMSALMIISFLYVLAALFLLI.

The protein localises to the membrane. This is an uncharacterized protein from Bacillus subtilis (strain 168).